The primary structure comprises 391 residues: 3-ketoacyl-CoA thiolase (391 aa).

Catalysis depends on Cys-90, which acts as the Acyl-thioester intermediate. Residues His-347 and Cys-377 each act as proton acceptor in the active site.

It belongs to the thiolase-like superfamily. Thiolase family.

The enzyme catalyses an acyl-CoA + acetyl-CoA = a 3-oxoacyl-CoA + CoA. Its pathway is lipid metabolism; fatty acid beta-oxidation. Involved in the degradation of long-chain fatty acids. This Bacillus subtilis (strain 168) protein is 3-ketoacyl-CoA thiolase (fadA).